The chain runs to 485 residues: MELWKRSIKELKELIEKKEVKPSEVIESFAQRTKDVEVKIKSYVTDLTEQAVERAKQLDEKISDLSEIPELFGIPIAIKDNISTEGIRTTCSSKILENYVPPFDATVIKRLKDKEYVITGKTNLDEFAMGSSTENSAFFVTRNPWDLDRVPGGSSGGSAAAVSAGLAPAALGSDTGGSIRQPAAFCGVIGLKPTYGRVSRYGLVAFASSLDQIGTFTRTVEDTAILLNIISGKDPKDSTSADREVPDFTKFLDKDIKGIKIGIPEEFFVEGLDSQIKELVMESAKLLEKEGAELVSISMPTTKYAIEAYYIIAPSEASSNLARYDGVRYGFRASDYSDLEEMYSKTRDEGFGAEVKRRIMLGTYSLSSGYYDAYYLKAQKVRTLIYQDFMKAFESVDIILTPTTPDVAFRIGEKVDDPLQMYLSDIFTVSVNMAGVPGMSIPCGFKDGLPVGMQLIGKPFDEGTIIQVADRFTKLKDFSKDFPQL.

Active-site charge relay system residues include lysine 79 and serine 154. The active-site Acyl-ester intermediate is the serine 178.

Belongs to the amidase family. GatA subfamily. Heterotrimer of A, B and C subunits.

It carries out the reaction L-glutamyl-tRNA(Gln) + L-glutamine + ATP + H2O = L-glutaminyl-tRNA(Gln) + L-glutamate + ADP + phosphate + H(+). Its function is as follows. Allows the formation of correctly charged Gln-tRNA(Gln) through the transamidation of misacylated Glu-tRNA(Gln) in organisms which lack glutaminyl-tRNA synthetase. The reaction takes place in the presence of glutamine and ATP through an activated gamma-phospho-Glu-tRNA(Gln). This chain is Glutamyl-tRNA(Gln) amidotransferase subunit A, found in Persephonella marina (strain DSM 14350 / EX-H1).